Here is a 349-residue protein sequence, read N- to C-terminus: Fructose-1,6-bisphosphatase class 1 (349 aa).

Mg(2+) is bound by residues E113, D135, I137, and D138. Substrate is bound by residues 138 to 141, N230, Y258, and K288; that span reads DGSS. Position 294 (E294) interacts with Mg(2+).

It belongs to the FBPase class 1 family. In terms of assembly, homotetramer. It depends on Mg(2+) as a cofactor.

It localises to the cytoplasm. It catalyses the reaction beta-D-fructose 1,6-bisphosphate + H2O = beta-D-fructose 6-phosphate + phosphate. It participates in carbohydrate biosynthesis; Calvin cycle. This chain is Fructose-1,6-bisphosphatase class 1, found in Trichormus variabilis (strain ATCC 29413 / PCC 7937) (Anabaena variabilis).